The following is a 242-amino-acid chain: Endoglucanase (242 aa).

A signal peptide spans 1–21 (MQVIVLPLVFLATFATSGSLA). Aspartate 47 serves as the catalytic Nucleophile. N-linked (GlcNAc...) asparagine glycans are attached at residues asparagine 79, asparagine 103, and asparagine 217.

Belongs to the glycosyl hydrolase 45 (cellulase K) family. As to expression, expressed in larval carcasses and gut, and adult gut.

The protein localises to the secreted. The enzyme catalyses Endohydrolysis of (1-&gt;4)-beta-D-glucosidic linkages in cellulose, lichenin and cereal beta-D-glucans.. The protein is Endoglucanase of Phaedon cochleariae (Mustard beetle).